The primary structure comprises 277 residues: Cell wall protein PGA30 (277 aa).

The signal sequence occupies residues M1 to A18. 2 N-linked (GlcNAc...) asparagine glycosylation sites follow: N129 and N178. The segment at V219–A246 is disordered. Residues A234–A246 show a composition bias toward polar residues. The GPI-anchor amidated glycine moiety is linked to residue G253. A propeptide spans G254–I277 (removed in mature form).

Belongs to the SRP1/TIP1 family. The GPI-anchor is attached to the protein in the endoplasmic reticulum and serves to target the protein to the cell surface. There, the glucosamine-inositol phospholipid moiety is cleaved off and the GPI-modified mannoprotein is covalently attached via its lipidless GPI glycan remnant to the 1,6-beta-glucan of the outer cell wall layer.

Its subcellular location is the secreted. The protein localises to the cell wall. It is found in the membrane. In terms of biological role, component of the cell wall involved in virulence which plays a role in the relationship between C.albicans and the host. The polypeptide is Cell wall protein PGA30 (PGA30) (Candida albicans (strain SC5314 / ATCC MYA-2876) (Yeast)).